The following is a 190-amino-acid chain: Protein PLANT CADMIUM RESISTANCE 8 (190 aa).

The interval 1–31 is disordered; that stretch reads MGRVTTPSEEDSNNGLPVQQPGTPNQRTRVP. Positions 13-28 are enriched in polar residues; sequence NNGLPVQQPGTPNQRT. T23 is modified (phosphothreonine). The helical transmembrane segment at 94–113 threads the bilayer; the sequence is LGTFMYLLMMPALCSHWVMG.

It belongs to the cornifelin family.

It localises to the cell membrane. Its function is as follows. May be involved in heavy metals transport. This chain is Protein PLANT CADMIUM RESISTANCE 8 (PCR8), found in Arabidopsis thaliana (Mouse-ear cress).